We begin with the raw amino-acid sequence, 529 residues long: Probable anion transporter 1, chloroplastic (529 aa).

The N-terminal 55 residues, 1–55, are a transit peptide targeting the chloroplast; it reads MLYLLPLSVSCRVPGSPPAPRSRRFLDPGGGRGVGDGLGGVRVFRRRALRGTDVR. Disordered regions lie at residues 13 to 39 and 52 to 78; these read VPGS…DGLG and TDVR…GGYG. Gly residues predominate over residues 28-39; the sequence is PGGGRGVGDGLG. Residues 67-76 are compositionally biased toward basic and acidic residues; the sequence is RHDDARHDGG. The next 11 helical transmembrane spans lie at 120 to 140, 158 to 178, 187 to 207, 209 to 229, 251 to 271, 274 to 294, 340 to 360, 378 to 398, 418 to 438, 469 to 489, and 503 to 523; these read WAIV…RVNM, VGLI…AGGI, TVLG…PFAA, LGLP…GVAM, LVYS…PLLI, FGWP…FSTW, VWAL…LLTW, LFCV…GWIA, IGFL…SPAM, AGVL…FGTA, and VFKV…LFST.

The protein belongs to the major facilitator superfamily. Sodium/anion cotransporter (TC 2.A.1.14) family.

The protein localises to the plastid. The protein resides in the chloroplast membrane. Its function is as follows. Probable anion transporter. The polypeptide is Probable anion transporter 1, chloroplastic (PHT4;1) (Oryza sativa subsp. japonica (Rice)).